Consider the following 415-residue polypeptide: uncharacterized protein (415 aa).

[4Fe-4S] cluster contacts are provided by Cys85, Cys91, Cys94, and Cys175. The S-adenosyl-L-methionine site is built by Gln248, Tyr276, Glu297, and Asn344. The active-site Nucleophile is the Cys371.

The protein belongs to the class I-like SAM-binding methyltransferase superfamily. RNA M5U methyltransferase family.

This is an uncharacterized protein from Leptospira interrogans serogroup Icterohaemorrhagiae serovar Lai (strain 56601).